The sequence spans 802 residues: Chondroitin sulfate synthase 1 (802 aa).

Residues 1–7 (MAARGRR) lie on the Cytoplasmic side of the membrane. The chain crosses the membrane as a helical; Signal-anchor for type II membrane protein span at residues 8–28 (AWLSVLLGLVLGFVLASRLVL). At 29–802 (PRASELKRAG…SNNNGSVRTA (774 aa)) the chain is on the lumenal side. The segment at 34-82 (LKRAGPRRRASPEGCRSGQAAASQAGGARGDARGAQLWPPGSDPDGGPR) is disordered. Composition is skewed to low complexity over residues 49–59 (RSGQAAASQAG) and 66–78 (RGAQ…SDPD). N189 and N623 each carry an N-linked (GlcNAc...) asparagine glycan. D633 and H747 together coordinate a divalent metal cation. N796 is a glycosylation site (N-linked (GlcNAc...) asparagine).

The protein belongs to the chondroitin N-acetylgalactosaminyltransferase family. The cofactor is Co(2+). It depends on Mn(2+) as a cofactor. Cd(2+) is required as a cofactor. Ubiquitous, with the highest levels in placenta. Detected at low levels in brain, heart, skeletal muscle, colon, thymus, spleen, kidney, liver, adrenal gland, mammary gland, stomach, small intestine, lung and peripheral blood leukocytes.

It is found in the golgi apparatus. The protein resides in the golgi stack membrane. Its subcellular location is the secreted. The enzyme catalyses 3-O-(beta-D-GlcA-(1-&gt;3)-beta-D-GalNAc-(1-&gt;4)-beta-D-GlcA-(1-&gt;3)-beta-D-Gal-(1-&gt;3)-beta-D-Gal-(1-&gt;4)-beta-D-Xyl)-L-seryl-[protein] + UDP-N-acetyl-alpha-D-galactosamine = 3-O-(beta-D-GalNAc-(1-&gt;4)-beta-D-GlcA-(1-&gt;3)-beta-D-GalNAc-(1-&gt;4)-beta-D-GlcA-(1-&gt;3)-beta-D-Gal-(1-&gt;3)-beta-D-Gal-(1-&gt;4)-beta-D-Xyl)-L-seryl-[protein] + UDP + H(+). It carries out the reaction 3-O-{beta-D-GlcA-(1-&gt;3)-[beta-D-GalNAc-(1-&gt;4)-beta-D-GlcA-(1-&gt;3)](n)-beta-D-GalNAc-(1-&gt;4)-beta-D-GlcA-(1-&gt;3)-beta-D-Gal-(1-&gt;3)-beta-D-Gal-(1-&gt;4)-beta-D-Xyl}-L-seryl-[protein] + UDP-N-acetyl-alpha-D-galactosamine = 3-O-{[beta-D-GalNAc-(1-&gt;4)-beta-D-GlcA-(1-&gt;3)](n+1)-beta-D-GalNAc-(1-&gt;4)-beta-D-GlcA-(1-&gt;3)-beta-D-Gal-(1-&gt;3)-beta-D-Gal-(1-&gt;4)-beta-D-Xyl}-L-seryl-[protein] + UDP + H(+). It catalyses the reaction 3-O-(beta-D-GalNAc-(1-&gt;4)-beta-D-GlcA-(1-&gt;3)-beta-D-Gal-(1-&gt;3)-beta-D-Gal-(1-&gt;4)-beta-D-Xyl)-L-seryl-[protein] + UDP-alpha-D-glucuronate = 3-O-(beta-D-GlcA-(1-&gt;3)-beta-D-GalNAc-(1-&gt;4)-beta-D-GlcA-(1-&gt;3)-beta-D-Gal-(1-&gt;3)-beta-D-Gal-(1-&gt;4)-beta-D-Xyl)-L-seryl-[protein] + UDP + H(+). The catalysed reaction is 3-O-{[beta-D-GalNAc-(1-&gt;4)-beta-D-GlcA-(1-&gt;3)](n)-beta-D-GalNAc-(1-&gt;4)-beta-D-GlcA-(1-&gt;3)-beta-D-Gal-(1-&gt;3)-beta-D-Gal-(1-&gt;4)-beta-D-Xyl}-L-seryl-[protein] + UDP-alpha-D-glucuronate = 3-O-{beta-D-GlcA-(1-&gt;3)-[beta-D-GalNAc-(1-&gt;4)-beta-D-GlcA-(1-&gt;3)](n)-beta-D-GalNAc-(1-&gt;4)-beta-D-GlcA-(1-&gt;3)-beta-D-Gal-(1-&gt;3)-beta-D-Gal-(1-&gt;4)-beta-D-Xyl}-L-seryl-[protein] + UDP + H(+). Functionally, has both beta-1,3-glucuronic acid and beta-1,4-N-acetylgalactosamine transferase activity. Transfers glucuronic acid (GlcUA) from UDP-GlcUA and N-acetylgalactosamine (GalNAc) from UDP-GalNAc to the non-reducing end of the elongating chondroitin polymer. Involved in the negative control of osteogenesis likely through the modulation of NOTCH signaling. The protein is Chondroitin sulfate synthase 1 of Homo sapiens (Human).